The sequence spans 515 residues: Putative ribose/galactose/methyl galactoside import ATP-binding protein (515 aa).

ABC transporter domains follow at residues 25–261 and 268–515; these read LEVL…VGRE and LREK…SGLN. Residue 57-64 coordinates ATP; the sequence is GENGAGKS.

It belongs to the ABC transporter superfamily. Carbohydrate importer 2 (CUT2) (TC 3.A.1.2) family.

It localises to the cell inner membrane. It carries out the reaction D-ribose(out) + ATP + H2O = D-ribose(in) + ADP + phosphate + H(+). It catalyses the reaction D-galactose(out) + ATP + H2O = D-galactose(in) + ADP + phosphate + H(+). Its function is as follows. Part of an ABC transporter complex involved in carbohydrate import. Could be involved in ribose, galactose and/or methyl galactoside import. Responsible for energy coupling to the transport system. The protein is Putative ribose/galactose/methyl galactoside import ATP-binding protein of Pseudomonas fluorescens (strain ATCC BAA-477 / NRRL B-23932 / Pf-5).